The sequence spans 1273 residues: ABC transporter B family member 2 (1273 aa).

An N-terminal signal peptide occupies residues 1-30 (MYISLIFFLSNHFPPLISIPIFIFLSFSSP). 7 helical membrane passes run 66–86 (FSFA…GACI), 91–111 (VPIF…AYLF), 126–146 (FVYL…CWMH), 209–229 (FIAG…VTLS), 230–250 (IVPL…GLIA), 305–325 (GLGL…LVWF), and 345–365 (LNVV…SAFV). Positions 77 to 366 (MTLGSVGACI…AAPDISAFVR (290 aa)) constitute an ABC transmembrane type-1 1 domain. The 237-residue stretch at 401–637 (IQFKDATFSY…PDGAYSSLLR (237 aa)) folds into the ABC transporter 1 domain. 436–443 (GGSGSGKS) serves as a coordination point for ATP. Residues Asn-466 and Asn-651 are each glycosylated (N-linked (GlcNAc...) asparagine). Residues 710–997 (GVCGTICAFI…TLALAPDLLK (288 aa)) enclose the ABC transmembrane type-1 2 domain. Helical transmembrane passes span 711–731 (VCGT…ALGV) and 752–772 (IAIL…IEHI). The N-linked (GlcNAc...) asparagine glycan is linked to Asn-806. 3 helical membrane passes run 832-852 (ILLQ…ILNW), 934-954 (IAGL…GLAL), and 975-995 (FMVL…APDL). Positions 1030-1266 (IELKGVHFSY…KSGPYFKLIS (237 aa)) constitute an ABC transporter 2 domain. 1065 to 1072 (GQSGSGKS) lines the ATP pocket. N-linked (GlcNAc...) asparagine glycans are attached at residues Asn-1217 and Asn-1256.

This sequence belongs to the ABC transporter superfamily. ABCB family. Multidrug resistance exporter (TC 3.A.1.201) subfamily. Interacts with 1-naphthylphthalamic acid (NPA).

It localises to the membrane. This chain is ABC transporter B family member 2 (ABCB2), found in Arabidopsis thaliana (Mouse-ear cress).